The sequence spans 874 residues: Cap-specific mRNA (nucleoside-2'-O-)-methyltransferase 1A (874 aa).

The span at 1 to 10 (MSERGDDDRT) shows a compositional bias: basic and acidic residues. The tract at residues 1–64 (MSERGDDDRT…APPTKQKTKA (64 aa)) is disordered. The G-patch domain occupies 60-106 (QKTKAEEMMERMGYKAGEGLGKNKQGIQEPVALSTQRGKTGLGHEGA). Residues 211-440 (FFQNRAAMKT…ERYITCKGLR (230 aa)) form the RrmJ-type SAM-dependent 2'-O-MTase domain. Positions 273 and 354 each coordinate S-adenosyl-L-methionine. Catalysis depends on K394, which acts as the Proton acceptor. The tract at residues 535 to 555 (PNKQRPRGGDRGSRNGNQERL) is disordered.

It carries out the reaction a 5'-end (N(7)-methyl 5'-triphosphoguanosine)-ribonucleoside in mRNA + S-adenosyl-L-methionine = a 5'-end (N(7)-methyl 5'-triphosphoguanosine)-(2'-O-methyl-ribonucleoside) in mRNA + S-adenosyl-L-homocysteine + H(+). S-adenosyl-L-methionine-dependent methyltransferase that mediates mRNA cap1 2'-O-ribose methylation to the 5'-cap structure of mRNAs. Methylates the ribose of the first nucleotide of a m(7)GpppG-capped mRNA to produce m(7)GpppNmp (cap1). Cap1 modification is linked to higher levels of translation. In Caenorhabditis briggsae, this protein is Cap-specific mRNA (nucleoside-2'-O-)-methyltransferase 1A.